Reading from the N-terminus, the 229-residue chain is MDYNGVLVGLGNPGARYEGTRHNCGFALIDAFVDFGYRHGTVDEMNGGKFSCQLWRVRLPRLDGCWLAAKPQTFMNLSGQCVQPLLSWHKLKAADLVVAHDELDIPPGELRFKFGGGNAGHNGLKSITELLGTPDFYRLRMGIGRPPHKGDVTNWVLGRPQGEDAENLDHILPLALDVLFAFADKGLDSAVRLAGKTTRPRKPVRQTANAEASNNSPEASATPQNKDNT.

Tyr-17 is a binding site for tRNA. The active-site Proton acceptor is the His-22. TRNA is bound by residues Phe-74, Asn-76, and Asn-122. Residues 194–229 form a disordered region; it reads AGKTTRPRKPVRQTANAEASNNSPEASATPQNKDNT. Over residues 207-223 the composition is skewed to low complexity; sequence TANAEASNNSPEASATP.

The protein belongs to the PTH family. In terms of assembly, monomer.

It localises to the cytoplasm. The catalysed reaction is an N-acyl-L-alpha-aminoacyl-tRNA + H2O = an N-acyl-L-amino acid + a tRNA + H(+). In terms of biological role, hydrolyzes ribosome-free peptidyl-tRNAs (with 1 or more amino acids incorporated), which drop off the ribosome during protein synthesis, or as a result of ribosome stalling. Functionally, catalyzes the release of premature peptidyl moieties from peptidyl-tRNA molecules trapped in stalled 50S ribosomal subunits, and thus maintains levels of free tRNAs and 50S ribosomes. In Desulfovibrio desulfuricans (strain ATCC 27774 / DSM 6949 / MB), this protein is Peptidyl-tRNA hydrolase.